A 396-amino-acid polypeptide reads, in one-letter code: Protein NDRG1-B (396 aa).

The tract at residues 326-396 (RSRTGSAASS…NTPKSMEVSC (71 aa)) is disordered. Low complexity predominate over residues 327 to 340 (SRTGSAASSSSQDG). Tandem repeats lie at residues 340–349 (GNRSRSHTNE), 350–359 (GSRSRSQTGD), 360–369 (GNRSRAHTGD), and 370–379 (GNRSRSHTDT). The segment at 340-379 (GNRSRSHTNEGSRSRSQTGDGNRSRAHTGDGNRSRSHTDT) is 4 X 10 AA tandem repeats of G-[NS]-R-S-R-[AS]-[HQ]-T-[DGN]-[DET]. The span at 366–377 (HTGDGNRSRSHT) shows a compositional bias: basic and acidic residues. Over residues 378–390 (DTNNVNSDHNTPK) the composition is skewed to polar residues.

This sequence belongs to the NDRG family.

Functionally, may be involved in pronephros development, after specification of the pronephros. The sequence is that of Protein NDRG1-B (ndrg1-b) from Xenopus laevis (African clawed frog).